The following is a 368-amino-acid chain: F-box/kelch-repeat protein At2g44700 (368 aa).

The interval 1–23 (MSSSNEPPRKTDQPSSSSASASA) is disordered. A compositionally biased stretch (low complexity) spans 14–23 (PSSSSASASA). In terms of domain architecture, F-box spans 25–71 (PSLFLSLPLEIISMILARVPKRYYPILCSVSKNMRSLVRSPEIHKAR). The Kelch repeat unit spans residues 177–221 (KVYVIGGYQDDEIAAESFDLNTQTWEAAPIPDEKESHRWICKANV).

This chain is F-box/kelch-repeat protein At2g44700, found in Arabidopsis thaliana (Mouse-ear cress).